A 313-amino-acid polypeptide reads, in one-letter code: Putative S-adenosyl-L-methionine-dependent methyltransferase MAP_4064c (313 aa).

Residues D129 and 158 to 159 (DL) contribute to the S-adenosyl-L-methionine site.

The protein belongs to the UPF0677 family.

Its function is as follows. Exhibits S-adenosyl-L-methionine-dependent methyltransferase activity. The sequence is that of Putative S-adenosyl-L-methionine-dependent methyltransferase MAP_4064c from Mycolicibacterium paratuberculosis (strain ATCC BAA-968 / K-10) (Mycobacterium paratuberculosis).